The sequence spans 1070 residues: DNA-directed RNA polymerase subunit beta (1070 aa).

It belongs to the RNA polymerase beta chain family. In terms of assembly, in plastids the minimal PEP RNA polymerase catalytic core is composed of four subunits: alpha, beta, beta', and beta''. When a (nuclear-encoded) sigma factor is associated with the core the holoenzyme is formed, which can initiate transcription.

Its subcellular location is the plastid. It localises to the chloroplast. It carries out the reaction RNA(n) + a ribonucleoside 5'-triphosphate = RNA(n+1) + diphosphate. Its function is as follows. DNA-dependent RNA polymerase catalyzes the transcription of DNA into RNA using the four ribonucleoside triphosphates as substrates. In Solanum bulbocastanum (Wild potato), this protein is DNA-directed RNA polymerase subunit beta.